The following is a 547-amino-acid chain: Chaperonin GroEL (547 aa).

Residues 30–33, K51, 87–91, G415, and D496 each bind ATP; these read TLGP and DGTTT.

This sequence belongs to the chaperonin (HSP60) family. As to quaternary structure, forms a cylinder of 14 subunits composed of two heptameric rings stacked back-to-back. Interacts with the co-chaperonin GroES.

Its subcellular location is the cytoplasm. It carries out the reaction ATP + H2O + a folded polypeptide = ADP + phosphate + an unfolded polypeptide.. In terms of biological role, together with its co-chaperonin GroES, plays an essential role in assisting protein folding. The GroEL-GroES system forms a nano-cage that allows encapsulation of the non-native substrate proteins and provides a physical environment optimized to promote and accelerate protein folding. This chain is Chaperonin GroEL, found in Actinobacillus pleuropneumoniae serotype 5b (strain L20).